The primary structure comprises 303 residues: UDP-3-O-acyl-N-acetylglucosamine deacetylase (303 aa).

Zn(2+) contacts are provided by H78, H237, and D241. H264 (proton donor) is an active-site residue.

This sequence belongs to the LpxC family. Zn(2+) serves as cofactor.

The catalysed reaction is a UDP-3-O-[(3R)-3-hydroxyacyl]-N-acetyl-alpha-D-glucosamine + H2O = a UDP-3-O-[(3R)-3-hydroxyacyl]-alpha-D-glucosamine + acetate. The protein operates within glycolipid biosynthesis; lipid IV(A) biosynthesis; lipid IV(A) from (3R)-3-hydroxytetradecanoyl-[acyl-carrier-protein] and UDP-N-acetyl-alpha-D-glucosamine: step 2/6. Its function is as follows. Catalyzes the hydrolysis of UDP-3-O-myristoyl-N-acetylglucosamine to form UDP-3-O-myristoylglucosamine and acetate, the committed step in lipid A biosynthesis. This Pseudomonas fluorescens (strain SBW25) protein is UDP-3-O-acyl-N-acetylglucosamine deacetylase.